The primary structure comprises 405 residues: Argininosuccinate synthase (405 aa).

Residues 13–21 (AYSGGLDTS) and alanine 40 each bind ATP. The L-citrulline site is built by tyrosine 91 and serine 96. Position 121 (glycine 121) interacts with ATP. Residues threonine 123, asparagine 127, and aspartate 128 each contribute to the L-aspartate site. Asparagine 127 provides a ligand contact to L-citrulline. Residues arginine 131, serine 182, serine 191, glutamate 267, and tyrosine 279 each contribute to the L-citrulline site.

The protein belongs to the argininosuccinate synthase family. Type 1 subfamily. As to quaternary structure, homotetramer.

The protein resides in the cytoplasm. It carries out the reaction L-citrulline + L-aspartate + ATP = 2-(N(omega)-L-arginino)succinate + AMP + diphosphate + H(+). The protein operates within amino-acid biosynthesis; L-arginine biosynthesis; L-arginine from L-ornithine and carbamoyl phosphate: step 2/3. The chain is Argininosuccinate synthase from Rhizobium meliloti (strain 1021) (Ensifer meliloti).